A 292-amino-acid chain; its full sequence is Ribosomal protein L11 methyltransferase (292 aa).

S-adenosyl-L-methionine contacts are provided by Thr136, Gly159, Asp181, and Asn228.

Belongs to the methyltransferase superfamily. PrmA family.

It localises to the cytoplasm. The catalysed reaction is L-lysyl-[protein] + 3 S-adenosyl-L-methionine = N(6),N(6),N(6)-trimethyl-L-lysyl-[protein] + 3 S-adenosyl-L-homocysteine + 3 H(+). In terms of biological role, methylates ribosomal protein L11. This chain is Ribosomal protein L11 methyltransferase, found in Rhizobium johnstonii (strain DSM 114642 / LMG 32736 / 3841) (Rhizobium leguminosarum bv. viciae).